Here is a 427-residue protein sequence, read N- to C-terminus: Mitogen-activated protein kinase 8B (427 aa).

A Protein kinase domain is found at 26-321 (YQNLRPIGSG…VDEALQHPYI (296 aa)). ATP-binding positions include 33 to 40 (GSGAQGIV) and lysine 55. Catalysis depends on aspartate 151, which acts as the Proton acceptor. A Phosphothreonine modification is found at threonine 183. Positions 183 to 185 (TPY) match the TXY motif. Tyrosine 185 bears the Phosphotyrosine mark. A disordered region spans residues 372-427 (IRGQPSPIGAAVINGSPQPSSSSSINDVSSMSTEPTVASDTDSSLEASAGPLSCCR). Residues 387 to 403 (SPQPSSSSSINDVSSMS) are compositionally biased toward low complexity. A compositionally biased stretch (polar residues) spans 404-417 (TEPTVASDTDSSLE).

This sequence belongs to the protein kinase superfamily. CMGC Ser/Thr protein kinase family. MAP kinase subfamily. Requires Mg(2+) as cofactor. Post-translationally, dually phosphorylated on Thr-183 and Tyr-185, which activates the enzyme. As to expression, expressed at high levels in the ovary and at lower levels in brain, gill, heart, spleen, liver, kidney, muscle, bladder and gut.

It carries out the reaction L-seryl-[protein] + ATP = O-phospho-L-seryl-[protein] + ADP + H(+). The enzyme catalyses L-threonyl-[protein] + ATP = O-phospho-L-threonyl-[protein] + ADP + H(+). With respect to regulation, activated by threonine and tyrosine phosphorylation. Its function is as follows. Responds to activation by environmental stress and pro-inflammatory cytokines by phosphorylating a number of transcription factors, primarily components of AP-1 such as c-Jun and ATF2 and thus regulates AP-1 transcriptional activity. May play a role in the regulation of the circadian clock. The sequence is that of Mitogen-activated protein kinase 8B (mapk8b) from Cyprinus carpio (Common carp).